Here is a 473-residue protein sequence, read N- to C-terminus: Zinc finger and BTB domain-containing protein 9 (473 aa).

A BTB domain is found at 48-112 (CDVSLLVQGR…IYSGRLRLPL (65 aa)). Positions 177–279 (QTPVQSSAST…LELPAPPALP (103 aa)) are disordered. Over residues 182 to 196 (SSASTESPASTESPV) the composition is skewed to low complexity. The segment covering 211-226 (VEEEEEEEEDDDDEDQ) has biased composition (acidic residues). Polar residues predominate over residues 227–239 (GSATLSQTPQPQR). Lysine 286 participates in a covalent cross-link: Glycyl lysine isopeptide (Lys-Gly) (interchain with G-Cter in SUMO1); alternate. Residue lysine 286 forms a Glycyl lysine isopeptide (Lys-Gly) (interchain with G-Cter in SUMO2); alternate linkage. Residues lysine 293 and lysine 307 each participate in a glycyl lysine isopeptide (Lys-Gly) (interchain with G-Cter in SUMO2) cross-link. The disordered stretch occupies residues 293–376 (KEEISGSGTQ…VHGPVKLGGT (84 aa)). Over residues 355 to 364 (SGGGGPGGAG) the composition is skewed to gly residues. Lysine 382 is covalently cross-linked (Glycyl lysine isopeptide (Lys-Gly) (interchain with G-Cter in SUMO2)). Residues 411–433 (FGCGICNKRFKLKHHLTEHMKTH) form a C2H2-type 1 zinc finger. Residues 438–460 (HACPHCGRRFRVHACFLRHRDLC) form a C2H2-type 2; atypical zinc finger.

The protein localises to the nucleus. Its function is as follows. May be involved in transcriptional regulation. This Homo sapiens (Human) protein is Zinc finger and BTB domain-containing protein 9 (ZBTB9).